The primary structure comprises 205 residues: Myb-related protein 305 (205 aa).

HTH myb-type domains follow at residues 10 to 62 (DVEV…LNYL) and 63 to 117 (RPDV…QKHM). DNA-binding regions (H-T-H motif) lie at residues 38 to 62 (WNSL…LNYL) and 90 to 113 (WSKI…RTRI).

Expressed only in flowers.

Its subcellular location is the nucleus. Functionally, transcription factor. In Antirrhinum majus (Garden snapdragon), this protein is Myb-related protein 305.